The chain runs to 411 residues: Glutamate dehydrogenase (411 aa).

The active site involves K102.

Belongs to the Glu/Leu/Phe/Val dehydrogenases family.

The enzyme catalyses L-glutamate + NAD(+) + H2O = 2-oxoglutarate + NH4(+) + NADH + H(+). It carries out the reaction L-glutamate + NADP(+) + H2O = 2-oxoglutarate + NH4(+) + NADPH + H(+). This is Glutamate dehydrogenase (GDH1) from Zea mays (Maize).